The primary structure comprises 304 residues: Putative S-adenosyl-L-methionine-dependent methyltransferase MAV_1058 (304 aa).

Residues D128 and 157-158 (DL) contribute to the S-adenosyl-L-methionine site.

The protein belongs to the UPF0677 family.

In terms of biological role, exhibits S-adenosyl-L-methionine-dependent methyltransferase activity. This is Putative S-adenosyl-L-methionine-dependent methyltransferase MAV_1058 from Mycobacterium avium (strain 104).